A 3164-amino-acid polypeptide reads, in one-letter code: Protein eyes shut homolog (3164 aa).

The N-terminal stretch at 1-21 (MTDKSIIILSLMVFHSSFING) is a signal peptide. 4 N-linked (GlcNAc...) asparagine glycosylation sites follow: N42, N105, N117, and N166. EGF-like domains follow at residues 170-212 (KQQF…KYCQ), 213-254 (ELDA…KNCS), and 256-292 (IIGQ…PFCE). 9 disulfide bridges follow: C174–C189, C183–C200, C202–C211, C217–C228, C222–C242, C244–C253, C260–C270, C265–C280, and C282–C291. 4 N-linked (GlcNAc...) asparagine glycosylation sites follow: N225, N252, N269, and N272. Residues N311 and N343 are each glycosylated (N-linked (GlcNAc...) asparagine). EGF-like domains follow at residues 332–368 (DVSE…LLCK) and 370–406 (IQTS…KNCE). Disulfide bonds link C336/C347, C341/C356, C358/C367, C374/C385, and C396/C405. N382 carries an N-linked (GlcNAc...) asparagine glycan. N506, N521, and N566 each carry an N-linked (GlcNAc...) asparagine glycan. The EGF-like 6 domain occupies 567–602 (TTDDQENECQHEAICKDEINRPRCSCSLSYIGRLCV). Intrachain disulfides connect C575-C590 and C592-C601. 2 N-linked (GlcNAc...) asparagine glycosylation sites follow: N611 and N654. The region spanning 643–679 (DTEDCKSVSCKNGTTSIHLRGYFFCKCVPGFKGTQRE) is the EGF-like 7 domain. 6 disulfide bridges follow: C652–C667, C685–C696, C690–C705, C707–C719, C737–C748, and C742–C757. The EGF-like 8; calcium-binding domain occupies 681–720 (DIDECASHPCKNGATCIDQPGNYFCQCVPPFKVVDGFSCL). Residues 733–769 (DIDDCILNACEHNSTCKDLHLSYQCVCLSGWEGNFSE) enclose the EGF-like 9; calcium-binding domain. 5 N-linked (GlcNAc...) asparagine glycosylation sites follow: N745, N766, N782, N783, and N805. The EGF-like 10; calcium-binding domain maps to 771-807 (ESNECKMNPCKNNSTCIDLYKSYRCECTSGWTGQNCS). Intrachain disulfides connect C775-C786, C780-C795, C797-C806, C813-C824, C818-C835, C837-C846, C853-C866, C860-C876, C878-C887, C894-C905, C899-C914, C916-C925, C932-C943, C937-C952, C954-C963, C970-C981, C975-C990, C992-C1001, C1008-C1019, C1013-C1028, C1030-C1039, C1046-C1056, C1051-C1065, C1067-C1076, C1083-C1094, C1088-C1103, C1105-C1114, C1121-C1137, C1131-C1147, C1149-C1158, C1165-C1176, C1170-C1185, and C1187-C1196. 3 consecutive EGF-like domains span residues 809–847 (EINE…RFCH), 849–888 (RYNP…KNCE), and 890–926 (DVKE…SLCE). N-linked (GlcNAc...) asparagine glycans are attached at residues N862 and N863. An EGF-like 14; calcium-binding domain is found at 928–964 (EINECSSEPCKNNGTCVDLTNRFFCNCEPGYHGPFCE). N940 is a glycosylation site (N-linked (GlcNAc...) asparagine). Residues 966–1002 (DVNKCKISPCLDEENCVYRTDGYNCLCAPGYTGINCE) enclose the EGF-like 15 domain. One can recognise an EGF-like 16; calcium-binding domain in the interval 1004-1040 (NLDECLSEPCLHDGVCIDGINHYTCDCKSGFFGTHCE). 3 consecutive EGF-like domains span residues 1042 to 1077 (NAND…TQCK), 1079 to 1115 (KIND…AYCE), and 1117 to 1159 (SIDN…QFCE). Residues 1161–1197 (NINECSSSPCLHGADCEDHINGYVCKCQPGWSGHHCE) enclose the EGF-like 20; calcium-binding domain. 6 N-linked (GlcNAc...) asparagine glycosylation sites follow: N1509, N1522, N1906, N1941, N1960, and N2033. In terms of domain architecture, Laminin G-like 1 spans 1883–2063 (FSCVRYYGDS…AVKNYHINNC (181 aa)). 4 disulfides stabilise this stretch: C2037–C2063, C2103–C2114, C2108–C2128, and C2130–C2139. The EGF-like 21 domain maps to 2099 to 2140 (APSVCQQDVCHNGGTCHPIFLSRGIVSFQCDCPLHFTGRFCE). Residues 2145 to 2339 (LFFPSFNGNS…NIENCHVPWC (195 aa)) enclose the Laminin G-like 2 domain. N-linked (GlcNAc...) asparagine glycosylation is found at N2170, N2185, and N2228. 6 cysteine pairs are disulfide-bonded: C2308-C2339, C2339-C2350, C2344-C2359, C2375-C2386, C2380-C2396, and C2398-C2407. 2 consecutive EGF-like domains span residues 2335 to 2368 (HVPW…YSGK) and 2371 to 2408 (QFAS…PLCT). The N-linked (GlcNAc...) asparagine glycan is linked to N2347. 5 N-linked (GlcNAc...) asparagine glycosylation sites follow: N2412, N2453, N2484, N2506, and N2532. One can recognise a Laminin G-like 3 domain in the interval 2419–2609 (SGTDAFGYTS…PNAGRSVGQC (191 aa)). Intrachain disulfides connect C2576/C2609, C2614/C2625, and C2619/C2634. EGF-like domains are found at residues 2610–2646 (HASP…AFCT) and 2648–2689 (TVST…IYCE). N-linked (GlcNAc...) asparagine glycosylation occurs at N2635. Intrachain disulfides connect C2636–C2645, C2652–C2668, C2662–C2677, and C2679–C2688. Residues 2717 to 2895 (DPSFRSNELS…AKGGSNVGDC (179 aa)) enclose the Laminin G-like 4 domain. 3 N-linked (GlcNAc...) asparagine glycosylation sites follow: N2775, N2800, and N2824. Disulfide bonds link C2868–C2895, C2900–C2911, C2905–C2920, and C2922–C2931. 2 EGF-like domains span residues 2896 to 2932 (DGTA…NTCN) and 2933 to 2970 (QSVY…RYCE). N2914 is a glycosylation site (N-linked (GlcNAc...) asparagine). An N-linked (GlcNAc...) asparagine glycan is attached at N2932. 3 disulfides stabilise this stretch: C2937–C2948, C2942–C2958, and C2960–C2969. N-linked (GlcNAc...) asparagine glycosylation occurs at N2951. N2971, N3006, N3036, N3057, N3073, and N3082 each carry an N-linked (GlcNAc...) asparagine glycan. The region spanning 2975 to 3164 (FSTAKFMGNS…YDGDEQNEVT (190 aa)) is the Laminin G-like 5 domain.

It belongs to the EYS family.

The protein localises to the cell projection. Its subcellular location is the cilium. It is found in the photoreceptor outer segment. It localises to the cytoplasm. The protein resides in the cytoskeleton. The protein localises to the cilium axoneme. Its subcellular location is the microtubule organizing center. It is found in the centrosome. It localises to the secreted. The protein resides in the extracellular space. The protein localises to the extracellular matrix. Its subcellular location is the interphotoreceptor matrix. Its function is as follows. Required to maintain the integrity of photoreceptor cells. Specifically required for normal morphology of the photoreceptor ciliary pocket, and might thus facilitate protein trafficking between the photoreceptor inner and outer segments via the transition zone. The polypeptide is Protein eyes shut homolog (EYS) (Pongo abelii (Sumatran orangutan)).